The primary structure comprises 434 residues: Trigger factor (434 aa).

One can recognise a PPIase FKBP-type domain in the interval 160–245 (GDKVKMNFVG…LTEVQAAQLP (86 aa)).

It belongs to the FKBP-type PPIase family. Tig subfamily.

It is found in the cytoplasm. It carries out the reaction [protein]-peptidylproline (omega=180) = [protein]-peptidylproline (omega=0). Involved in protein export. Acts as a chaperone by maintaining the newly synthesized protein in an open conformation. Functions as a peptidyl-prolyl cis-trans isomerase. In Shewanella denitrificans (strain OS217 / ATCC BAA-1090 / DSM 15013), this protein is Trigger factor.